The chain runs to 337 residues: Major outer membrane protein P.IB (337 aa).

The N-terminal stretch at 1–19 (MKKSLIALTLAALPVAAMA) is a signal peptide.

The protein belongs to the Gram-negative porin family. Homotrimer.

It is found in the cell outer membrane. Its function is as follows. Serves as a slightly cation selective porin. This is Major outer membrane protein P.IB (por) from Neisseria lactamica.